The chain runs to 63 residues: Ct-IT2 (63 aa).

Residues 1 to 63 form the LCN-type CS-alpha/beta domain; it reads KDGYPMDSKG…VWDKATNKCG (63 aa). 4 disulfide bridges follow: C11–C62, C15–C36, C22–C43, and C26–C45. Glycine amide is present on G63.

In terms of tissue distribution, expressed by the venom gland.

It localises to the secreted. In terms of biological role, beta toxins bind voltage-independently at site-4 of sodium channels (Nav) and shift the voltage of activation toward more negative potentials thereby affecting sodium channel activation and promoting spontaneous and repetitive firing. Is highly active on insects, since it provokes paralysis and death when injected into crickets. In Centruroides tecomanus (Scorpion), this protein is Ct-IT2.